A 194-amino-acid polypeptide reads, in one-letter code: 22 kDa relaxation protein (194 aa).

This protein is probably required for relaxation complex formation. The sequence is that of 22 kDa relaxation protein from Salmonella typhimurium.